The following is a 378-amino-acid chain: Alcohol dehydrogenase 1 (378 aa).

Residue cysteine 48 coordinates Zn(2+). 49–53 is a binding site for NAD(+); that stretch reads HTDVL. Zn(2+) is bound by residues histidine 69, cysteine 99, cysteine 102, cysteine 105, cysteine 113, and cysteine 177. Residues 202–207, aspartate 226, lysine 231, 274–276, 297–299, and 321–323 each bind NAD(+); these read GIGTVG, TGV, IGA, and TAF.

This sequence belongs to the zinc-containing alcohol dehydrogenase family. Class-IV subfamily. Homodimer. It depends on Zn(2+) as a cofactor. Present in non-glandular trichome cells.

The protein localises to the nucleus. It localises to the cytoplasm. Its subcellular location is the cytosol. It carries out the reaction (+)-artemisinic alcohol + NAD(+) = (+)-artemisinic aldehyde + NADH + H(+). Its pathway is sesquiterpene biosynthesis. In terms of biological role, involved in the biosynthesis of the antimalarial endoperoxide artemisinin. Catalyzes the conversion of artemisinic alcohol into artemisinic aldehyde. This Artemisia annua (Sweet wormwood) protein is Alcohol dehydrogenase 1.